Consider the following 229-residue polypeptide: Transcriptional activator protein IrlR (229 aa).

A Response regulatory domain is found at 2-115 (RILIVEDEPK…ELVARVRSIL (114 aa)). Asp-51 is subject to 4-aspartylphosphate. The ompR/PhoB-type DNA-binding region spans 123 to 221 (STVLRIADLE…VRGMGYVLEV (99 aa)).

Phosphorylated by IrlS.

Functionally, member of the two-component regulatory system IrlR/IrlS. May be involved in invasion of eukaryotic cells and heavy-metal resistance. The sequence is that of Transcriptional activator protein IrlR (irlR) from Burkholderia pseudomallei (strain 1026b).